We begin with the raw amino-acid sequence, 208 residues long: Thymidylate kinase (208 aa).

10-17 (GLEGAGKS) is an ATP binding site.

Belongs to the thymidylate kinase family.

The enzyme catalyses dTMP + ATP = dTDP + ADP. Phosphorylation of dTMP to form dTDP in both de novo and salvage pathways of dTTP synthesis. The polypeptide is Thymidylate kinase (Pseudoalteromonas translucida (strain TAC 125)).